A 241-amino-acid polypeptide reads, in one-letter code: 2-C-methyl-D-erythritol 4-phosphate cytidylyltransferase (241 aa).

It belongs to the IspD/TarI cytidylyltransferase family. IspD subfamily. As to quaternary structure, homodimer.

It catalyses the reaction 2-C-methyl-D-erythritol 4-phosphate + CTP + H(+) = 4-CDP-2-C-methyl-D-erythritol + diphosphate. It participates in isoprenoid biosynthesis; isopentenyl diphosphate biosynthesis via DXP pathway; isopentenyl diphosphate from 1-deoxy-D-xylulose 5-phosphate: step 2/6. Functionally, catalyzes the formation of 4-diphosphocytidyl-2-C-methyl-D-erythritol from CTP and 2-C-methyl-D-erythritol 4-phosphate (MEP). This Yersinia pseudotuberculosis serotype I (strain IP32953) protein is 2-C-methyl-D-erythritol 4-phosphate cytidylyltransferase.